We begin with the raw amino-acid sequence, 263 residues long: MKLTISHHKCAIRKVMAEFVGVALLVIFGAGTACQVVLSTNPSSFLSINFGWAIGIATGAWVSAGISGGHINPAITIAMATYRGFPWREVPGYIFAQALGGFVGAALVYANYFHAIDIFEGGHIRTQATASLFATFALPYMTQASCFFSEFLATAVLFIVFLALNDKHNGALTNGLLPFALFILFIGLGASLGMQTGYAVNPARDFGPRLFLAMAGYGKAVFNYRRQYWIWAPIIAPILGAQAGGLLYDTSIYNGDDSPIKWR.

Residues 1–18 lie on the Cytoplasmic side of the membrane; sequence MKLTISHHKCAIRKVMAE. Residues 19–39 form a helical membrane-spanning segment; sequence FVGVALLVIFGAGTACQVVLS. Residues 40–45 are Extracellular-facing; sequence TNPSSF. Residues 46-66 traverse the membrane as a helical segment; it reads LSINFGWAIGIATGAWVSAGI. Over 67 to 89 the chain is Cytoplasmic; it reads SGGHINPAITIAMATYRGFPWRE. The short motif at 72–74 is the NPA 1 element; that stretch reads NPA. The helical transmembrane segment at 90–110 threads the bilayer; it reads VPGYIFAQALGGFVGAALVYA. Over 111–143 the chain is Extracellular; the sequence is NYFHAIDIFEGGHIRTQATASLFATFALPYMTQ. A helical transmembrane segment spans residues 144-164; it reads ASCFFSEFLATAVLFIVFLAL. Residues 165-169 are Cytoplasmic-facing; it reads NDKHN. A helical membrane pass occupies residues 170–190; that stretch reads GALTNGLLPFALFILFIGLGA. Over 191–227 the chain is Extracellular; the sequence is SLGMQTGYAVNPARDFGPRLFLAMAGYGKAVFNYRRQ. The NPA 2 motif lies at 201 to 203; the sequence is NPA. Residues 228-248 form a helical membrane-spanning segment; the sequence is YWIWAPIIAPILGAQAGGLLY. The Cytoplasmic segment spans residues 249–263; the sequence is DTSIYNGDDSPIKWR.

It belongs to the MIP/aquaporin (TC 1.A.8) family.

It localises to the membrane. The catalysed reaction is H2O(in) = H2O(out). Water channel required to facilitate the transport of water across membranes. Shows low but significant water conductivity, but no glycerol nor ammonium transport activities. The chain is Aquaporin Lacbi1:247946 from Laccaria bicolor (strain S238N-H82 / ATCC MYA-4686) (Bicoloured deceiver).